A 309-amino-acid chain; its full sequence is tRNA dimethylallyltransferase (309 aa).

Position 8 to 15 (Gly8 to Ser15) interacts with ATP. A substrate-binding site is contributed by Thr10–Ser15. Residues Asp33–Gln36 form an interaction with substrate tRNA region.

This sequence belongs to the IPP transferase family. In terms of assembly, monomer. It depends on Mg(2+) as a cofactor.

It catalyses the reaction adenosine(37) in tRNA + dimethylallyl diphosphate = N(6)-dimethylallyladenosine(37) in tRNA + diphosphate. Its function is as follows. Catalyzes the transfer of a dimethylallyl group onto the adenine at position 37 in tRNAs that read codons beginning with uridine, leading to the formation of N6-(dimethylallyl)adenosine (i(6)A). This chain is tRNA dimethylallyltransferase, found in Trichodesmium erythraeum (strain IMS101).